Consider the following 131-residue polypeptide: D-ribose pyranase (131 aa).

The active-site Proton donor is the His-20. Residues Asp-28, His-98, and Phe-120–Asn-122 each bind substrate.

The protein belongs to the RbsD / FucU family. RbsD subfamily. In terms of assembly, homodecamer.

Its subcellular location is the cytoplasm. It carries out the reaction beta-D-ribopyranose = beta-D-ribofuranose. Its pathway is carbohydrate metabolism; D-ribose degradation; D-ribose 5-phosphate from beta-D-ribopyranose: step 1/2. Functionally, catalyzes the interconversion of beta-pyran and beta-furan forms of D-ribose. This chain is D-ribose pyranase, found in Oenococcus oeni (strain ATCC BAA-331 / PSU-1).